Consider the following 431-residue polypeptide: tRNA-2-methylthio-N(6)-dimethylallyladenosine synthase (431 aa).

The 116-residue stretch at 2-117 (KKLFIETLGC…ITEVVDKKHA (116 aa)) folds into the MTTase N-terminal domain. [4Fe-4S] cluster-binding residues include cysteine 11, cysteine 48, cysteine 80, cysteine 149, cysteine 153, and cysteine 156. In terms of domain architecture, Radical SAM core spans 135 to 368 (RTNPFKAMVN…QTRHTEILDE (234 aa)). A TRAM domain is found at 371 to 431 (DAQLGKVHEV…SRGALDGVLV (61 aa)).

The protein belongs to the methylthiotransferase family. MiaB subfamily. As to quaternary structure, monomer. It depends on [4Fe-4S] cluster as a cofactor.

The protein localises to the cytoplasm. The enzyme catalyses N(6)-dimethylallyladenosine(37) in tRNA + (sulfur carrier)-SH + AH2 + 2 S-adenosyl-L-methionine = 2-methylsulfanyl-N(6)-dimethylallyladenosine(37) in tRNA + (sulfur carrier)-H + 5'-deoxyadenosine + L-methionine + A + S-adenosyl-L-homocysteine + 2 H(+). Functionally, catalyzes the methylthiolation of N6-(dimethylallyl)adenosine (i(6)A), leading to the formation of 2-methylthio-N6-(dimethylallyl)adenosine (ms(2)i(6)A) at position 37 in tRNAs that read codons beginning with uridine. The chain is tRNA-2-methylthio-N(6)-dimethylallyladenosine synthase from Sulfurovum sp. (strain NBC37-1).